We begin with the raw amino-acid sequence, 275 residues long: MRPPFPGTPDSSKKSANLTVKLETQAVSVYYGSHLAVKQVSLKIPKNHITAFIGPSGCGKSTLLRCFNRMNDLIPGARVEGSVIFHGKNIYDPDVDPAEVRRRVGLVFQKPNPFPKSIYDNIAFGPRVNGYQGDLDELVERALRQAVLWDEVKDKLKTSGLSLSGGQQQRLCIARTLAIQPEVILMDEPCASLDPISTLRIEELLKELGRRYTIIIVTHNMQQAARVSDFTAFFNTEVDEEGFRYGRLVEFNRTEKIFNSPAHRETEEYVSGRFG.

The ABC transporter domain occupies 22-261 (LETQAVSVYY…NRTEKIFNSP (240 aa)). ATP is bound at residue 54–61 (GPSGCGKS).

The protein belongs to the ABC transporter superfamily. Phosphate importer (TC 3.A.1.7) family. The complex is composed of two ATP-binding proteins (PstB), two transmembrane proteins (PstC and PstA) and a solute-binding protein (PstS).

It localises to the cell inner membrane. The catalysed reaction is phosphate(out) + ATP + H2O = ADP + 2 phosphate(in) + H(+). Part of the ABC transporter complex PstSACB involved in phosphate import. Responsible for energy coupling to the transport system. This Synechococcus sp. (strain JA-2-3B'a(2-13)) (Cyanobacteria bacterium Yellowstone B-Prime) protein is Phosphate import ATP-binding protein PstB 1.